A 308-amino-acid chain; its full sequence is Porphobilinogen deaminase (308 aa).

Residue Cys243 is modified to S-(dipyrrolylmethanemethyl)cysteine.

It belongs to the HMBS family. As to quaternary structure, monomer. Dipyrromethane is required as a cofactor.

It catalyses the reaction 4 porphobilinogen + H2O = hydroxymethylbilane + 4 NH4(+). It functions in the pathway porphyrin-containing compound metabolism; protoporphyrin-IX biosynthesis; coproporphyrinogen-III from 5-aminolevulinate: step 2/4. In terms of biological role, tetrapolymerization of the monopyrrole PBG into the hydroxymethylbilane pre-uroporphyrinogen in several discrete steps. The polypeptide is Porphobilinogen deaminase (Mesorhizobium japonicum (strain LMG 29417 / CECT 9101 / MAFF 303099) (Mesorhizobium loti (strain MAFF 303099))).